Reading from the N-terminus, the 289-residue chain is Bis(5'-nucleosyl)-tetraphosphatase, symmetrical (289 aa).

This sequence belongs to the Ap4A hydrolase family.

It carries out the reaction P(1),P(4)-bis(5'-adenosyl) tetraphosphate + H2O = 2 ADP + 2 H(+). Its function is as follows. Hydrolyzes diadenosine 5',5'''-P1,P4-tetraphosphate to yield ADP. The chain is Bis(5'-nucleosyl)-tetraphosphatase, symmetrical from Yersinia pseudotuberculosis serotype IB (strain PB1/+).